The primary structure comprises 585 residues: Amyloid protein-binding protein 2 (585 aa).

TPR repeat units follow at residues 50–83 (QGRL…HHCF), 120–153 (IQVG…CTLH), 206–239 (AALY…ITAG), 288–321 (SDTL…RQSV), 333–367 (HEDL…ITHI), 429–462 (AKHY…KEQL), 471–505 (ALSV…GKKL), and 514–547 (EYDY…NRLR).

As to quaternary structure, component of a CRL2 E3 ubiquitin-protein ligase complex, also named ECS (Elongin BC-CUL2/5-SOCS-box protein) complex, composed of CUL2, Elongin BC (ELOB and ELOC), RBX1 and substrate-specific adapter APPBP2. Interacts with APP; APP interaction inhibits the E3 ubiquitin-protein ligase activity of the CRL2(APPBP2) complex. Post-translationally, rapidly degraded by the proteasome upon overexpression of a C-terminal fragment of APP.

The protein resides in the nucleus. Its subcellular location is the cytoplasm. It localises to the cytoskeleton. The protein localises to the membrane. It functions in the pathway protein modification; protein ubiquitination. Its activity is regulated as follows. E3 ubiquitin-protein ligase activity of the CRL2(APPBP2) complex is inhibited by APP. Functionally, substrate-recognition component of a Cul2-RING (CRL2) E3 ubiquitin-protein ligase complex of the DesCEND (destruction via C-end degrons) pathway, which recognizes a C-degron located at the extreme C terminus of target proteins, leading to their ubiquitination and degradation. The C-degron recognized by the DesCEND pathway is usually a motif of less than ten residues and can be present in full-length proteins, truncated proteins or proteolytically cleaved forms. The CRL2(APPBP2) complex specifically recognizes proteins with a -Arg-Xaa-Xaa-Gly degron at the C-terminus, leading to their ubiquitination and degradation. The CRL2(APPBP2) complex mediates ubiquitination and degradation of truncated SELENOV selenoproteins produced by failed UGA/Sec decoding, which end with a -Arg-Xaa-Xaa-Gly degron. May play a role in intracellular protein transport: may be involved in the translocation of APP along microtubules toward the cell surface. In Homo sapiens (Human), this protein is Amyloid protein-binding protein 2.